The sequence spans 139 residues: ATP synthase epsilon chain (139 aa).

It belongs to the ATPase epsilon chain family. F-type ATPases have 2 components, CF(1) - the catalytic core - and CF(0) - the membrane proton channel. CF(1) has five subunits: alpha(3), beta(3), gamma(1), delta(1), epsilon(1). CF(0) has three main subunits: a, b and c.

The protein localises to the cell inner membrane. Produces ATP from ADP in the presence of a proton gradient across the membrane. The polypeptide is ATP synthase epsilon chain (Salmonella typhimurium (strain LT2 / SGSC1412 / ATCC 700720)).